The primary structure comprises 1516 residues: EF-hand calcium-binding domain-containing protein 6 (1516 aa).

Residues 1–23 (MKRNGTRLNFAKANSTKSGSTRA) are disordered. Over residues 12 to 21 (KANSTKSGST) the composition is skewed to polar residues. 5 EF-hand domains span residues 96-131 (SRRD…FLIP), 197-232 (RNMR…FCLR), 321-356 (KSYE…FIYR), 444-462 (SGHI…MVAK), and 528-563 (RNLQ…FCPY). Ca(2+) is bound by residues Asp-109, Asn-111, Asn-113, Met-115, Asp-120, Asp-210, Asn-212, Thr-214, and Glu-221. The tract at residues 618-638 (EEPGQQDERTQPSGEKTSEIN) is disordered. Residues 628-638 (QPSGEKTSEIN) show a composition bias toward polar residues. 6 consecutive EF-hand domains span residues 674–690 (KINQ…SGMP), 763–798 (ESFR…LQLN), 905–940 (LTPR…RYSP), 1086–1121 (SSQP…VCQK), 1193–1228 (SHYH…HIQI), and 1229–1264 (LTDE…ERVP). Positions 776, 778, 780, and 787 each coordinate Ca(2+). Thr-906 is subject to Phosphothreonine. The tract at residues 1263-1318 (VPSPPMAAGDSGESTMAQRGSSAPEFSQGTRSNLYSPPRDSRVGLKSRSHPCTPVG) is disordered. A Phosphoserine modification is found at Ser-1265. Positions 1274–1297 (GESTMAQRGSSAPEFSQGTRSNLY) are enriched in polar residues. Residue Ser-1311 is modified to Phosphoserine. A phosphothreonine mark is found at Thr-1315 and Thr-1319. Residues 1318–1516 (GTPPLQNCEP…YNDFLRAFLQ (199 aa)) form an interaction with PARK7 region. EF-hand domains lie at 1348–1373 (KEKD…FKLD), 1374–1409 (ISRE…LLKA), 1454–1484 (MRRS…YSIN), and 1485–1516 (LSEE…AFLQ). The interval 1422–1516 (NADKMKEAGM…YNDFLRAFLQ (95 aa)) is interaction with AR. Ca(2+)-binding residues include Asp-1462, Asn-1464, Thr-1466, and Asp-1473.

In terms of assembly, microtubule inner protein component of sperm flagellar doublet microtubules. Binds PARK7. Part of a ternary complex containing PARK7, EFCAB6/DJBP and AR.

The protein resides in the nucleus. The protein localises to the cytoplasm. Its subcellular location is the cytoskeleton. It localises to the flagellum axoneme. Negatively regulates the androgen receptor by recruiting histone deacetylase complex, and protein DJ-1 antagonizes this inhibition by abrogation of this complex. Microtubule inner protein (MIP) part of the dynein-decorated doublet microtubules (DMTs) in cilia axoneme, which is required for motile cilia beating. This chain is EF-hand calcium-binding domain-containing protein 6 (Efcab6), found in Mus musculus (Mouse).